Here is a 74-residue protein sequence, read N- to C-terminus: uncharacterized protein (74 aa).

Residues 54 to 72 (LIIPRFLLLIYSVIQCLFL) form a helical membrane-spanning segment.

The protein resides in the membrane. This is an uncharacterized protein from Saccharomyces cerevisiae (strain ATCC 204508 / S288c) (Baker's yeast).